The following is a 523-amino-acid chain: UDP-glucuronosyltransferase 3A2 (523 aa).

An N-terminal signal peptide occupies residues 1–22 (MAAHRRWLLMSFLFLEVILLEA). Topologically, residues 23 to 487 (AKILTISTLS…QPWHEQYMLD (465 aa)) are extracellular. N-linked (GlcNAc...) asparagine glycosylation occurs at Asn-52. Residues 488-508 (VFLFLLGLMLGTLWLSVKVLV) traverse the membrane as a helical segment. The Cytoplasmic segment spans residues 509-523 (AVTRYLSIATKVKEA).

It belongs to the UDP-glycosyltransferase family. As to expression, highly expressed in kidney, while it is expressed at low levels in liver. Not detected in other tissues examined.

It is found in the membrane. It carries out the reaction glucuronate acceptor + UDP-alpha-D-glucuronate = acceptor beta-D-glucuronoside + UDP + H(+). Functionally, UDP-glucuronosyltransferases catalyze phase II biotransformation reactions in which lipophilic substrates are conjugated with glucuronic acid to increase water solubility and enhance excretion. They are of major importance in the conjugation and subsequent elimination of potentially toxic xenobiotics and endogenous compounds. The polypeptide is UDP-glucuronosyltransferase 3A2 (Ugt3a2) (Mus musculus (Mouse)).